We begin with the raw amino-acid sequence, 159 residues long: Transcriptional repressor NrdR (159 aa).

The segment at 3–34 (CPFCRHEDTQVVDSRVSEDGAAIRRRRRCSAC) is a zinc-finger region. One can recognise an ATP-cone domain in the interval 49-139 (PAVVKKDGSR…VYRRFEDVSE (91 aa)).

The protein belongs to the NrdR family. The cofactor is Zn(2+).

In terms of biological role, negatively regulates transcription of bacterial ribonucleotide reductase nrd genes and operons by binding to NrdR-boxes. This is Transcriptional repressor NrdR from Burkholderia multivorans (strain ATCC 17616 / 249).